A 317-amino-acid polypeptide reads, in one-letter code: Sulfate adenylyltransferase subunit 2 (317 aa).

Residues 1–10 (MSNAVHETDS) are compositionally biased toward basic and acidic residues. 2 disordered regions span residues 1-21 (MSNAVHETDSKNTVASKPPLD) and 298-317 (RAIDRDQSGSMEKKKREGYF).

This sequence belongs to the PAPS reductase family. CysD subfamily. As to quaternary structure, heterodimer composed of CysD, the smaller subunit, and CysN.

It carries out the reaction sulfate + ATP + H(+) = adenosine 5'-phosphosulfate + diphosphate. It participates in sulfur metabolism; hydrogen sulfide biosynthesis; sulfite from sulfate: step 1/3. In terms of biological role, with CysN forms the ATP sulfurylase (ATPS) that catalyzes the adenylation of sulfate producing adenosine 5'-phosphosulfate (APS) and diphosphate, the first enzymatic step in sulfur assimilation pathway. APS synthesis involves the formation of a high-energy phosphoric-sulfuric acid anhydride bond driven by GTP hydrolysis by CysN coupled to ATP hydrolysis by CysD. This chain is Sulfate adenylyltransferase subunit 2, found in Agrobacterium fabrum (strain C58 / ATCC 33970) (Agrobacterium tumefaciens (strain C58)).